Consider the following 419-residue polypeptide: L-rhamnose isomerase (419 aa).

The Mn(2+) site is built by His-262, Asp-294, and Asp-296.

The protein belongs to the rhamnose isomerase family. In terms of assembly, homotetramer. The cofactor is Mn(2+).

The protein localises to the cytoplasm. The catalysed reaction is L-rhamnopyranose = L-rhamnulose. It functions in the pathway carbohydrate degradation; L-rhamnose degradation; glycerone phosphate from L-rhamnose: step 1/3. Catalyzes the interconversion of L-rhamnose and L-rhamnulose. The polypeptide is L-rhamnose isomerase (Escherichia coli O7:K1 (strain IAI39 / ExPEC)).